The following is an 88-amino-acid chain: Arminin 1c (88 aa).

The N-terminal stretch at M1–A18 is a signal peptide. The propeptide occupies E19 to A57. V85 carries the post-translational modification Valine amide.

The protein belongs to the arminin family. As to expression, expressed in entodermal epithelium along the body column.

It is found in the secreted. The protein localises to the target cell membrane. In terms of biological role, antimicrobial peptide with a broad-spectrum antimicrobial activity. Keeps its antibacterial activity under a wide range of salt concentrations that mimic physiological conditions of human blood, which is surprising, since Hydra is an obligate freshwater animal with nearly no salt tolerance. Does not affect red blood cells. This Hydra vulgaris (Hydra) protein is Arminin 1c.